Here is a 467-residue protein sequence, read N- to C-terminus: Mothers against decapentaplegic homolog 2 (467 aa).

Serine 2 is modified (N-acetylserine). A Phosphothreonine; by MAPK3 modification is found at threonine 8. The region spanning 10–176 is the MH1 domain; it reads PVVKRLLGWK…YQRVETPVLP (167 aa). The residue at position 19 (lysine 19) is an N6-acetyllysine. Residues cysteine 74, cysteine 149, cysteine 161, and histidine 166 each contribute to the Zn(2+) site. Polar residues predominate over residues 207–217; the sequence is PAGIEPQSNYI. Residues 207–251 form a disordered region; sequence PAGIEPQSNYIPETPPPGYISEDGETSDQQLNQSMDTGSPAELSP. Threonine 220 is subject to Phosphothreonine. A PY-motif motif is present at residues 221–225; it reads PPPGY. Residues 233 to 243 show a composition bias toward polar residues; the sequence is SDQQLNQSMDT. Position 240 is a phosphoserine; by CAMK2 (serine 240). A phosphoserine mark is found at serine 245, serine 250, serine 255, serine 458, serine 460, and serine 464. An MH2 domain is found at 274-467; the sequence is WCSIAYYELN…SPSVRCSSMS (194 aa). Serine 465 and serine 467 each carry phosphoserine; by TGFBR1.

Belongs to the dwarfin/SMAD family. As to quaternary structure, monomer; in the absence of TGF-beta. Heterodimer; in the presence of TGF-beta. Forms a heterodimer with co-SMAD, SMAD4, in the nucleus to form the transactivation complex SMAD2/SMAD4. Found in a complex with SMAD3 and TRIM33 upon addition of TGF-beta. Identified in a complex that contains at least ZNF451, SMAD2, SMAD3 and SMAD4. Interacts (via the MH2 domain) with ZFYVE9; may form trimers with the SMAD4 co-SMAD. Interacts with TAZ/WWRT1. Interacts with FOXH1. Interacts with SNW1. Interacts with CREB-binding protein (CBP) and EP300. Interacts with SNON. Interacts with ALK4/ACVR1B. Interacts with SKOR1. Interacts with SKOR2. Interacts with PRDM16. Interacts (via MH2 domain) with LEMD3. Interacts with RBPMS. Interacts with WWP1. Interacts (dephosphorylated form, via the MH1 and MH2 domains) with RANBP3 (via its C-terminal R domain); the interaction results in the export of dephosphorylated SMAD3 out of the nucleus and termination of the TGF-beta signaling. Interacts with PDPK1 (via PH domain). Interacts with DAB2; the interactions are enhanced upon TGF-beta stimulation. Interacts with USP15. Interacts with PPP5C. Interacts with LDLRAD4 (via the SMAD interaction motif). Interacts (via MH2 domain) with PMEPA1 (via the SMAD interaction motif). Interacts with ZFHX3. Interacts with ZNF451. Interacts with SMURF2 when phosphorylated on Ser-465/467. Interacts with PPM1A. Interacts with TGF-beta. Interacts with TGFBR1. Interacts with TGIF. Interacts with SMAD3 and TRIM33. Interacts with ZNF580. Interacts with NEDD4L in response to TGF-beta. Interacts with HGS. Interacts with AIP1. Interacts with WWP1. Interacts with PML. Interacts weakly with ZNF8. Interacts (when phosphorylated) with RNF111; RNF111 acts as an enhancer of the transcriptional responses by mediating ubiquitination and degradation of SMAD2 inhibitors. Interacts with YAP1 (when phosphorylated at 'Ser-127'). Interacts when phosphorylated with IPO7; the interaction facilitates translocation of SMAD2 to the nucleus. Interacts with MTMR4; negatively regulates TGF-beta signaling through SMAD2 dephosphorylation and retention in endosomes. Phosphorylated on one or several of Thr-220, Ser-245, Ser-250, and Ser-255. In response to TGF-beta, phosphorylated on Ser-465/467 by TGF-beta and activin type 1 receptor kinases. TGF-beta-induced Ser-465/467 phosphorylation declines progressively in a KMT5A-dependent manner. Able to interact with SMURF2 when phosphorylated on Ser-465/467, recruiting other proteins, such as SNON, for degradation. In response to decorin, the naturally occurring inhibitor of TGF-beta signaling, phosphorylated on Ser-240 by CaMK2. Phosphorylated by MAPK3 upon EGF stimulation; which increases transcriptional activity and stability, and is blocked by calmodulin. Phosphorylated by PDPK1. In terms of processing, in response to TGF-beta, ubiquitinated by NEDD4L; which promotes its degradation. Monoubiquitinated, leading to prevent DNA-binding. Deubiquitination by USP15 alleviates inhibition and promotes activation of TGF-beta target genes. Ubiquitinated by RNF111, leading to its degradation: only SMAD2 proteins that are 'in use' are targeted by RNF111, RNF111 playing a key role in activating SMAD2 and regulating its turnover. Post-translationally, acetylated on Lys-19 by coactivators in response to TGF-beta signaling, which increases transcriptional activity. Isoform short: Acetylation increases DNA binding activity in vitro and enhances its association with target promoters in vivo. Acetylation in the nucleus by EP300 is enhanced by TGF-beta. Expressed at high levels in skeletal muscle, endothelial cells, heart and placenta.

It localises to the cytoplasm. The protein localises to the nucleus. In terms of biological role, receptor-regulated SMAD (R-SMAD) that is an intracellular signal transducer and transcriptional modulator activated by TGF-beta (transforming growth factor) and activin type 1 receptor kinases. Binds the TRE element in the promoter region of many genes that are regulated by TGF-beta and, on formation of the SMAD2/SMAD4 complex, activates transcription. Promotes TGFB1-mediated transcription of odontoblastic differentiation genes in dental papilla cells. Positively regulates PDPK1 kinase activity by stimulating its dissociation from the 14-3-3 protein YWHAQ which acts as a negative regulator. May act as a tumor suppressor in colorectal carcinoma. This Homo sapiens (Human) protein is Mothers against decapentaplegic homolog 2 (SMAD2).